The sequence spans 162 residues: Superoxide dismutase [Cu-Zn] (162 aa).

A signal peptide spans 1–20 (MNKSGIILIGTILFSSMAIA). The Cu cation site is built by His66, His68, and His83. An intrachain disulfide couples Cys73 to Cys158. Positions 83, 92, 100, and 103 each coordinate Zn(2+). His137 contacts Cu cation.

This sequence belongs to the Cu-Zn superoxide dismutase family. In terms of assembly, homodimer. The cofactor is Cu cation. Zn(2+) is required as a cofactor.

The protein resides in the periplasm. The enzyme catalyses 2 superoxide + 2 H(+) = H2O2 + O2. In terms of biological role, destroys radicals which are normally produced within the cells and which are toxic to biological systems. In Legionella pneumophila, this protein is Superoxide dismutase [Cu-Zn] (sodC).